Here is a 534-residue protein sequence, read N- to C-terminus: Lysophosphatidylcholine acyltransferase 1 (534 aa).

The interval 1–25 (MRLRGRGPRAAPSSSSGAGDARRLA) is disordered. Residues 1 to 57 (MRLRGRGPRAAPSSSSGAGDARRLAPPGRNPFVHELRLSALQKAQVAFMTLTLFPIR) are Cytoplasmic-facing. The span at 8-19 (PRAAPSSSSGAG) shows a compositional bias: low complexity. Residues 58–78 (LLFAAFMMLLAWPFALVASLG) form a helical; Signal-anchor for type II membrane protein membrane-spanning segment. Over 79-534 (PPDKEPEQPL…GRKNSCKKVD (456 aa)) the chain is Lumenal. An HXXXXD motif motif is present at residues 135–140 (HSSYFD). EF-hand domains follow at residues 379–414 (PVSD…VCRP) and 451–486 (ISEL…YPDF). Positions 392, 394, 398, and 403 each coordinate Ca(2+). The short motif at 531–534 (KKVD) is the Di-lysine motif element.

The protein belongs to the 1-acyl-sn-glycerol-3-phosphate acyltransferase family. In terms of tissue distribution, enriched in alveolar type II cells of lung. Also highly expressed in stomach.

Its subcellular location is the endoplasmic reticulum membrane. It is found in the golgi apparatus membrane. The protein localises to the cell membrane. It localises to the lipid droplet. It carries out the reaction a 1-acyl-sn-glycero-3-phosphocholine + an acyl-CoA = a 1,2-diacyl-sn-glycero-3-phosphocholine + CoA. It catalyses the reaction a 1-O-alkyl-sn-glycero-3-phosphocholine + acetyl-CoA = a 1-O-alkyl-2-acetyl-sn-glycero-3-phosphocholine + CoA. The enzyme catalyses a 1-acyl-sn-glycero-3-phosphate + an acyl-CoA = a 1,2-diacyl-sn-glycero-3-phosphate + CoA. The catalysed reaction is a 1-O-(1Z-alkenyl)-sn-glycero-3-phosphocholine + an acyl-CoA = a 1-O-(1Z-alkenyl)-2-acyl-sn-glycero-3-phosphocholine + CoA. It carries out the reaction 1-acyl-sn-glycero-3-phospho-(1'-sn-glycerol) + an acyl-CoA = a 1,2-diacyl-sn-glycero-3-phospho-(1'-sn-glycerol) + CoA. It catalyses the reaction a 1-acyl-sn-glycero-3-phosphocholine + hexadecanoyl-CoA = 1-acyl-2-hexadecanoyl-sn-glycero-3-phosphocholine + CoA. The enzyme catalyses a 1-acyl-sn-glycero-3-phosphate + hexadecanoyl-CoA = 1-acyl-2-hexadecanoyl-sn-glycero-3-phosphate + CoA. The catalysed reaction is 1-acyl-sn-glycero-3-phospho-(1'-sn-glycerol) + hexadecanoyl-CoA = 1-acyl-2-hexadecanoyl-sn-glycero-3-phospho-(1'-sn-glycerol) + CoA. It carries out the reaction 1-hexadecanoyl-sn-glycero-3-phosphocholine + hexadecanoyl-CoA = 1,2-dihexadecanoyl-sn-glycero-3-phosphocholine + CoA. It catalyses the reaction 1-O-hexadecyl-sn-glycero-3-phosphocholine + hexadecanoyl-CoA = 1-O-hexadecyl-2-hexadecanoyl-sn-glycero-3-phosphocholine + CoA. The enzyme catalyses a 1-O-(1Z-alkenyl)-sn-glycero-3-phosphocholine + hexadecanoyl-CoA = 1-O-(1Z)-alkenyl-2-hexadecanoyl-sn-glycero-3-phosphocholine + CoA. The catalysed reaction is 1-hexadecanoyl-sn-glycero-3-phospho-(1'-sn-glycerol) + hexadecanoyl-CoA = 1,2-dihexadecanoyl-sn-glycero-3-phospho-(1'-sn-glycerol) + CoA. It carries out the reaction 1-dodecanoyl-sn-glycero-3-phosphocholine + hexadecanoyl-CoA = 1-dodecanoyl-2-hexadecanoyl-sn-glycero-3-phosphocholine + CoA. It catalyses the reaction 1-tetradecanoyl-sn-glycero-3-phosphocholine + hexadecanoyl-CoA = 1-tetradecanoyl-2-hexadecanoyl-sn-glycero-3-phosphocholine + CoA. The enzyme catalyses 1-O-octadecyl-sn-glycero-3-phosphocholine + hexadecanoyl-CoA = 1-O-octadecyl-2-hexadecanoyl-sn-glycero-3-phosphocholine + CoA. The catalysed reaction is 1-octadecanoyl-sn-glycero-3-phosphocholine + hexadecanoyl-CoA = 1-octadecanoyl-2-hexadecanoyl-sn-glycero-3-phosphocholine + CoA. It carries out the reaction 1-(9Z-octadecenoyl)-sn-glycero-3-phosphocholine + hexadecanoyl-CoA = 1-(9Z-octadecenoyl)-2-hexadecanoyl-sn-glycero-3-phosphocholine + CoA. It catalyses the reaction 1-eicosanoyl-sn-glycero-3-phosphocholine + hexadecanoyl-CoA = 1-eicosanoyl-2-hexadecanoyl-sn-glycero-3-phosphocholine + CoA. The enzyme catalyses hexanoyl-CoA + 1-hexadecanoyl-sn-glycero-3-phosphocholine = 1-hexadecanoyl-2-hexanoyl-sn-glycero-3-phosphocholine + CoA. The catalysed reaction is octanoyl-CoA + 1-hexadecanoyl-sn-glycero-3-phosphocholine = 1-hexadecanoyl-2-octanoyl-sn-glycero-3-phosphocholine + CoA. It carries out the reaction decanoyl-CoA + 1-hexadecanoyl-sn-glycero-3-phosphocholine = 1-hexadecanoyl-2-decanoyl-sn-glycero-3-phosphocholine + CoA. It catalyses the reaction dodecanoyl-CoA + 1-hexadecanoyl-sn-glycero-3-phosphocholine = 1-hexadecanoyl-2-dodecanoyl-sn-glycero-3-phosphocholine + CoA. The enzyme catalyses tetradecanoyl-CoA + 1-hexadecanoyl-sn-glycero-3-phosphocholine = 1-hexadecanoyl-2-tetradecanoyl-sn-glycero-3-phosphocholine + CoA. The catalysed reaction is 1-hexadecanoyl-sn-glycero-3-phosphocholine + (9Z)-octadecenoyl-CoA = 1-hexadecanoyl-2-(9Z-octadecenoyl)-sn-glycero-3-phosphocholine + CoA. It carries out the reaction (9Z,12Z)-octadecadienoyl-CoA + 1-hexadecanoyl-sn-glycero-3-phosphocholine = 1-hexadecanoyl-2-(9Z,12Z-octadecadienoyl)-sn-glycero-3-phosphocholine + CoA. It catalyses the reaction (4Z,7Z,10Z,13Z,16Z,19Z)-docosahexaenoyl-CoA + 1-hexadecanoyl-sn-glycero-3-phosphocholine = 1-hexadecanoyl-2-(4Z,7Z,10Z,13Z,16Z,19Z-docosahexaenoyl)-sn-glycero-3-phosphocholine + CoA. The enzyme catalyses 1-hexadecanoyl-sn-glycero-3-phosphocholine + acetyl-CoA = 1-hexadecanoyl-2-acetyl-sn-glycero-3-phosphocholine + CoA. The catalysed reaction is eicosanoyl-CoA + 1-hexadecanoyl-sn-glycero-3-phosphocholine = 1-hexadecanoyl-2-eicosanoyl-sn-glycero-3-phosphocholine + CoA. It carries out the reaction 1-O-hexadecyl-sn-glycero-3-phosphocholine + acetyl-CoA = 1-O-hexadecyl-2-acetyl-sn-glycero-3-phosphocholine + CoA. The protein operates within lipid metabolism; phospholipid metabolism. Its activity is regulated as follows. Activity is stimulated by Mg(2+) or Mn(2+). Its function is as follows. Exhibits acyltransferase activity. Exhibits acetyltransferase activity. Activity is calcium-independent. Catalyzes the conversion of lysophosphatidylcholine (1-acyl-sn-glycero-3-phosphocholine or LPC) into phosphatidylcholine (1,2-diacyl-sn-glycero-3-phosphocholine or PC). Catalyzes the conversion 1-acyl-sn-glycerol-3-phosphate (lysophosphatidic acid or LPA) into 1,2-diacyl-sn-glycerol-3-phosphate (phosphatidic acid or PA) by incorporating an acyl moiety at the sn-2 position of the glycerol backbone. Displays a clear preference for saturated fatty acyl-CoAs, and 1-myristoyl or 1-palmitoyl LPC as acyl donors and acceptors, respectively. Involved in platelet-activating factor (PAF) biosynthesis by catalyzing the conversion of the PAF precursor, 1-O-alkyl-sn-glycero-3-phosphocholine (lyso-PAF) into 1-O-alkyl-2-acetyl-sn-glycero-3-phosphocholine (PAF). May synthesize phosphatidylcholine in pulmonary surfactant, thereby playing a pivotal role in respiratory physiology. Involved in the regulation of lipid droplet number and size. The protein is Lysophosphatidylcholine acyltransferase 1 (Lpcat1) of Rattus norvegicus (Rat).